The primary structure comprises 449 residues: UDP-N-acetylmuramoylalanine--D-glutamate ligase (449 aa).

118–124 (GTNGKTT) serves as a coordination point for ATP.

It belongs to the MurCDEF family.

Its subcellular location is the cytoplasm. The enzyme catalyses UDP-N-acetyl-alpha-D-muramoyl-L-alanine + D-glutamate + ATP = UDP-N-acetyl-alpha-D-muramoyl-L-alanyl-D-glutamate + ADP + phosphate + H(+). The protein operates within cell wall biogenesis; peptidoglycan biosynthesis. Functionally, cell wall formation. Catalyzes the addition of glutamate to the nucleotide precursor UDP-N-acetylmuramoyl-L-alanine (UMA). The protein is UDP-N-acetylmuramoylalanine--D-glutamate ligase of Staphylococcus saprophyticus subsp. saprophyticus (strain ATCC 15305 / DSM 20229 / NCIMB 8711 / NCTC 7292 / S-41).